A 599-amino-acid polypeptide reads, in one-letter code: Estrogen receptor (599 aa).

The interval 1 to 188 is modulating (transactivation AF-1); mediates interaction with MACROD1; sequence MTMTLHTKAS…IMESAKETRY (188 aa). A glycan (O-linked (GlcNAc) serine) is linked at S10. A required for interaction with NCOA1 region spans residues 35–47; the sequence is MERALGEVYVDNS. Positions 35–178 are interaction with DDX5; self-association; sequence MERALGEVYV…LSSSNEKGNM (144 aa). An O-linked (GlcNAc) threonine glycan is attached at T50. Phosphoserine; by CDK2 is present on residues S108 and S110. S122 bears the Phosphoserine mark. Residues 147-175 are disordered; that stretch reads DTGPPAFYRSNSDNRRQNGRERLSSSNEK. A compositionally biased stretch (basic and acidic residues) spans 158–169; sequence SDNRRQNGRERL. At S171 the chain carries Phosphoserine; by CK2. NR C4-type zinc fingers lie at residues 189 to 209 and 225 to 249; these read CAVCNDYASGYHYGVWSCEGC and CPATNQCTIDKNRRKSCQACRLRKC. Positions 189-254 form a DNA-binding region, nuclear receptor; the sequence is CAVCNDYASG…RLRKCYEVGM (66 aa). The segment at 189–314 is mediates interaction with DNTTIP2; sequence CAVCNDYASG…TKKNSPALSL (126 aa). The segment at 255-314 is hinge; the sequence is MKGGIRKDRRGGRMLKHKRQRDDLEGRNEMGASGDMRAANLWPSPLVIKHTKKNSPALSL. R264 carries the asymmetric dimethylarginine; by PRMT1 modification. Residues 266 to 599 are interaction with AKAP13; the sequence is GRMLKHKRQR…PEAEGFPNTI (334 aa). Positions 268 to 599 are self-association; that stretch reads MLKHKRQRDD…PEAEGFPNTI (332 aa). Residues 315 to 551 enclose the NR LBD domain; sequence TADQMVSALL…DLLLEMLDAH (237 aa). Residues 315–599 form a transactivation AF-2 region; the sequence is TADQMVSALL…PEAEGFPNTI (285 aa). 17beta-estradiol is bound by residues E357 and R398. Residue C451 is the site of S-palmitoyl cysteine attachment. Residue H528 coordinates 17beta-estradiol. Residue Y541 is modified to Phosphotyrosine; by Tyr-kinases. Residues 557–581 form a disordered region; sequence ASRMGVPPEEPSQTQLATTSSTSAH. Over residues 568-581 the composition is skewed to low complexity; that stretch reads SQTQLATTSSTSAH. T575 carries an O-linked (GlcNAc) threonine glycan.

This sequence belongs to the nuclear hormone receptor family. NR3 subfamily. Interacts with BCAS3. Binds DNA as a homodimer. Can form a heterodimer with ESR2. Interacts with coactivator NCOA5. Interacts with PELP1, the interaction is enhanced by 17-beta-estradiol; the interaction increases ESR1 transcriptional activity. Interacts with NCOA7; the interaction is ligand-inducible. Interacts with AKAP13, CUEDC2, HEXIM1, KDM5A, MAP1S, SMARD1, and UBE1C. Interacts with MUC1; the interaction is stimulated by 7 beta-estradiol (E2) and enhances ESR1-mediated transcription. Interacts with DNTTIP2, and UIMC1. Interacts with KMT2D/MLL2. Interacts with ATAD2; the interaction is enhanced by estradiol. Interacts with KIF18A and LDB1. Interacts with RLIM (via its C-terminus). Interacts with MACROD1. Interacts with SH2D4A and PLCG. Interacts with SH2D4A; the interaction blocks binding to PLCG and inhibits estrogen-induced cell proliferation. Interacts with DYNLL1. Interacts with CCDC62; the interaction requires estradiol and appears to enhance the transcription of target genes. Interacts with NR2C1; the interaction prevents homodimerization of ESR1 and suppresses its transcriptional activity and cell growth. Interacts with DNAAF4. Interacts with PRMT2. Interacts with RBFOX2. Interacts with EP300; the interaction is estrogen-dependent and enhanced by CITED1. Interacts with CITED1; the interaction is estrogen-dependent. Interacts with FAM120B, FOXL2, PHB2 and SLC30A9. Interacts with coactivators NCOA3 and NCOA6. Interacts with STK3/MST2 only in the presence of SAV1 and vice-versa. Binds to CSNK1D. Interacts with NCOA2; NCOA2 can interact with ESR1 AF-1 and AF-2 domains simultaneously and mediate their transcriptional synergy. Interacts with DDX5. Interacts with NCOA1; the interaction seems to require a self-association of N-terminal and C-terminal regions. Interacts with ZNF366, DDX17, NFKB1, RELA, SP1 and SP3. Interacts with NRIP1. Interacts with GPER1; the interaction occurs in an estrogen-dependent manner. Interacts with CLOCK and the interaction is stimulated by estrogen. Interacts with BCAS3. Interacts with TRIP4 (ufmylated); estrogen dependent. Interacts with LMTK3; the interaction phosphorylates ESR1 (in vitro) and protects it against proteasomal degradation. Interacts with CCAR2 (via N-terminus) in a ligand-independent manner. Interacts with ZFHX3. Interacts with SFR1 in a ligand-dependent and -independent manner. Interacts with DCAF13, LATS1 and DCAF1; regulates ESR1 ubiquitination and ubiquitin-mediated proteasomal degradation. Interacts (via DNA-binding domain) with POU4F2 isoform 2 (C-terminus); this interaction increases the estrogen receptor ESR1 transcriptional activity in a DNA- and ligand 17-beta-estradiol-independent manner. Interacts with ESRRB isoform 1. Interacts with UBE3A and WBP2. Interacts with GTF2B. Interacts with RBM39. In the absence of hormonal ligand, interacts with TACC1. Interacts with PI3KR1 or PI3KR2 and PTK2/FAK1. Interacts with SRC. Interacts with BAG1; the interaction is promoted in the absence of estradiol (17-beta-estradiol/E2). Interacts with and ubiquitinated by STUB1; the interaction is promoted in the absence of estradiol (17-beta-estradiol/E2). Interacts with NEDD8. In terms of processing, phosphorylated by cyclin A/CDK2 and CK1. Phosphorylation probably enhances transcriptional activity. Dephosphorylation at Ser-122 by PPP5C inhibits its transactivation activity. Phosphorylated by LMTK3 (in vitro). Post-translationally, ubiquitinated. Deubiquitinated by OTUB1. Palmitoylated at Cys-451 by ZDHHC7 and ZDHHC21. This modification is required for plasma membrane targeting and for rapid intracellular signaling via ERK and AKT kinases and cAMP generation, but not for signaling mediated by the nuclear hormone receptor. In terms of processing, ubiquitinated; regulated by LATS1 via DCAF1 it leads to ESR1 proteasomal degradation. Deubiquitinated by OTUB1. Ubiquitinated by STUB1/CHIP; in the CA1 hippocampal region following loss of endogenous circulating estradiol (17-beta-estradiol/E2). Ubiquitinated by UBR5, leading to its degradation: UBR5 specifically recognizes and binds ligand-bound ESR1 when it is not associated with coactivators (NCOAs). In presence of NCOAs, the UBR5-degron is not accessible, preventing its ubiquitination and degradation. Post-translationally, dimethylated by PRMT1 at Arg-264. The methylation may favor cytoplasmic localization. Demethylated by JMJD6 at Arg-264.

Its subcellular location is the nucleus. The protein localises to the cytoplasm. It localises to the golgi apparatus. It is found in the cell membrane. In terms of biological role, nuclear hormone receptor. The steroid hormones and their receptors are involved in the regulation of eukaryotic gene expression and affect cellular proliferation and differentiation in target tissues. Ligand-dependent nuclear transactivation involves either direct homodimer binding to a palindromic estrogen response element (ERE) sequence or association with other DNA-binding transcription factors, such as AP-1/c-Jun, c-Fos, ATF-2, Sp1 and Sp3, to mediate ERE-independent signaling. Ligand binding induces a conformational change allowing subsequent or combinatorial association with multiprotein coactivator complexes through LXXLL motifs of their respective components. Mutual transrepression occurs between the estrogen receptor (ER) and NF-kappa-B in a cell-type specific manner. Decreases NF-kappa-B DNA-binding activity and inhibits NF-kappa-B-mediated transcription from the IL6 promoter and displace RELA/p65 and associated coregulators from the promoter. Recruited to the NF-kappa-B response element of the CCL2 and IL8 promoters and can displace CREBBP. Present with NF-kappa-B components RELA/p65 and NFKB1/p50 on ERE sequences. Can also act synergistically with NF-kappa-B to activate transcription involving respective recruitment adjacent response elements; the function involves CREBBP. Can activate the transcriptional activity of TFF1. Also mediates membrane-initiated estrogen signaling involving various kinase cascades. Essential for MTA1-mediated transcriptional regulation of BRCA1 and BCAS3. Maintains neuronal survival in response to ischemic reperfusion injury when in the presence of circulating estradiol (17-beta-estradiol/E2). This chain is Estrogen receptor (Esr1), found in Mus musculus (Mouse).